The sequence spans 496 residues: Probable glycine dehydrogenase (decarboxylating) subunit 2 (496 aa).

Lysine 265 is modified (N6-(pyridoxal phosphate)lysine).

The protein belongs to the GcvP family. C-terminal subunit subfamily. The glycine cleavage system is composed of four proteins: P, T, L and H. In this organism, the P 'protein' is a heterodimer of two subunits. Pyridoxal 5'-phosphate is required as a cofactor.

The catalysed reaction is N(6)-[(R)-lipoyl]-L-lysyl-[glycine-cleavage complex H protein] + glycine + H(+) = N(6)-[(R)-S(8)-aminomethyldihydrolipoyl]-L-lysyl-[glycine-cleavage complex H protein] + CO2. In terms of biological role, the glycine cleavage system catalyzes the degradation of glycine. The P protein binds the alpha-amino group of glycine through its pyridoxal phosphate cofactor; CO(2) is released and the remaining methylamine moiety is then transferred to the lipoamide cofactor of the H protein. The sequence is that of Probable glycine dehydrogenase (decarboxylating) subunit 2 from Thioalkalivibrio sulfidiphilus (strain HL-EbGR7).